We begin with the raw amino-acid sequence, 328 residues long: Stress response kinase A (328 aa).

D201 serves as the catalytic Proton acceptor. Mg(2+) contacts are provided by N206 and D217. The active site involves D217.

The protein belongs to the SrkA/RdoA protein kinase family. Monomer. Requires Mg(2+) as cofactor.

Its subcellular location is the cytoplasm. It catalyses the reaction L-seryl-[protein] + ATP = O-phospho-L-seryl-[protein] + ADP + H(+). The catalysed reaction is L-threonyl-[protein] + ATP = O-phospho-L-threonyl-[protein] + ADP + H(+). Functionally, a protein kinase that phosphorylates Ser and Thr residues. Probably acts to suppress the effects of stress linked to accumulation of reactive oxygen species. Probably involved in the extracytoplasmic stress response. The sequence is that of Stress response kinase A from Salmonella choleraesuis (strain SC-B67).